A 536-amino-acid chain; its full sequence is Membrane protein insertase YidC (536 aa).

A run of 5 helical transmembrane segments spans residues 7–27 (FFIFAFLFVSFLLWQAWQSQS), 338–358 (LLSTIHNFIGNWGFSIILITF), 419–439 (LPVFIQMPIFLSLYYMLIGSV), 453–473 (LSDQDPYYVLPIFMGLTMFFI), and 494–514 (PFIFTVFFLWFPSGLVLYYIV).

The protein belongs to the OXA1/ALB3/YidC family. Type 1 subfamily. Interacts with the Sec translocase complex via SecD. Specifically interacts with transmembrane segments of nascent integral membrane proteins during membrane integration.

The protein localises to the cell membrane. Required for the insertion and/or proper folding and/or complex formation of integral membrane proteins into the membrane. Involved in integration of membrane proteins that insert both dependently and independently of the Sec translocase complex, as well as at least some lipoproteins. Aids folding of multispanning membrane proteins. In Buchnera aphidicola subsp. Schizaphis graminum (strain Sg), this protein is Membrane protein insertase YidC.